We begin with the raw amino-acid sequence, 155 residues long: Small ribosomal subunit protein uS7 (155 aa).

This sequence belongs to the universal ribosomal protein uS7 family. Part of the 30S ribosomal subunit. Contacts proteins S9 and S11.

Functionally, one of the primary rRNA binding proteins, it binds directly to 16S rRNA where it nucleates assembly of the head domain of the 30S subunit. Is located at the subunit interface close to the decoding center, probably blocks exit of the E-site tRNA. In Fervidobacterium nodosum (strain ATCC 35602 / DSM 5306 / Rt17-B1), this protein is Small ribosomal subunit protein uS7.